The chain runs to 341 residues: MTTDAVQTMIPTLDITERPAPAPRAKVEAGVKLRGAEKVARIPVKIIPTTELPKKPDWIRVRIPVSPEVDRIKALLRKHKLHSVCEEASCPNLGECFSGGTATFMIMGDICTRRCPFCDVGHGRPKPLDVNEPESLAIAIADLKLKYVVITSVDRDDLRDGGAQHFADCIREIRKLSPNVMLETLVPDYRGRMDVALEITAAEPPDVFNHNLETVPRLYKAARPGSDYQWSLTLLQKFKQMMPHIPTKSGLMLGLGETDEEVIEVMKRMREHDIDMLTLGQYLQPSRSHLPVQRFVHPDTFAWFAEEGYKMGFKNVASGPLVRSSYHADEQAKLVKASLVS.

[4Fe-4S] cluster contacts are provided by Cys85, Cys90, Cys96, Cys111, Cys115, Cys118, and Ser325. Residues 97-314 (FSGGTATFMI…AEEGYKMGFK (218 aa)) form the Radical SAM core domain.

This sequence belongs to the radical SAM superfamily. Lipoyl synthase family. [4Fe-4S] cluster is required as a cofactor.

The protein resides in the cytoplasm. The catalysed reaction is [[Fe-S] cluster scaffold protein carrying a second [4Fe-4S](2+) cluster] + N(6)-octanoyl-L-lysyl-[protein] + 2 oxidized [2Fe-2S]-[ferredoxin] + 2 S-adenosyl-L-methionine + 4 H(+) = [[Fe-S] cluster scaffold protein] + N(6)-[(R)-dihydrolipoyl]-L-lysyl-[protein] + 4 Fe(3+) + 2 hydrogen sulfide + 2 5'-deoxyadenosine + 2 L-methionine + 2 reduced [2Fe-2S]-[ferredoxin]. The protein operates within protein modification; protein lipoylation via endogenous pathway; protein N(6)-(lipoyl)lysine from octanoyl-[acyl-carrier-protein]: step 2/2. Catalyzes the radical-mediated insertion of two sulfur atoms into the C-6 and C-8 positions of the octanoyl moiety bound to the lipoyl domains of lipoate-dependent enzymes, thereby converting the octanoylated domains into lipoylated derivatives. The protein is Lipoyl synthase of Pseudomonas fluorescens (strain SBW25).